A 260-amino-acid polypeptide reads, in one-letter code: Mediator of RNA polymerase II transcription subunit 8 (260 aa).

The protein belongs to the Mediator complex subunit 8 family. Component of the Mediator complex.

The protein resides in the nucleus. Functionally, component of the Mediator complex, a coactivator involved in the regulated transcription of nearly all RNA polymerase II-dependent genes. Mediator functions as a bridge to convey information from gene-specific regulatory proteins to the basal RNA polymerase II transcription machinery. Mediator is recruited to promoters by direct interactions with regulatory proteins and serves as a scaffold for the assembly of a functional preinitiation complex with RNA polymerase II and the general transcription factors. This is Mediator of RNA polymerase II transcription subunit 8 (med8) from Emericella nidulans (strain FGSC A4 / ATCC 38163 / CBS 112.46 / NRRL 194 / M139) (Aspergillus nidulans).